The sequence spans 194 residues: Probable transcription factor At4g00130 (194 aa).

It belongs to the GeBP family.

The chain is Probable transcription factor At4g00130 from Arabidopsis thaliana (Mouse-ear cress).